The chain runs to 684 residues: Probable Xaa-Pro aminopeptidase P (684 aa).

Positions 481, 492, 590, and 604 each coordinate Mn(2+).

This sequence belongs to the peptidase M24B family. It depends on Mn(2+) as a cofactor.

It carries out the reaction Release of any N-terminal amino acid, including proline, that is linked to proline, even from a dipeptide or tripeptide.. Functionally, catalyzes the removal of a penultimate prolyl residue from the N-termini of peptides. This is Probable Xaa-Pro aminopeptidase P (ampp) from Neurospora crassa (strain ATCC 24698 / 74-OR23-1A / CBS 708.71 / DSM 1257 / FGSC 987).